The chain runs to 212 residues: Translation initiation factor IF-3 (212 aa).

A disordered region spans residues 168-212 (MAPKAPASPKKDKADRPEGDAGDTDMAAPAPAPAAAPETESAPSA). Positions 176–186 (PKKDKADRPEG) are enriched in basic and acidic residues. Residues 194 to 212 (AAPAPAPAAAPETESAPSA) show a composition bias toward low complexity.

Belongs to the IF-3 family. In terms of assembly, monomer.

The protein localises to the cytoplasm. In terms of biological role, IF-3 binds to the 30S ribosomal subunit and shifts the equilibrium between 70S ribosomes and their 50S and 30S subunits in favor of the free subunits, thus enhancing the availability of 30S subunits on which protein synthesis initiation begins. This chain is Translation initiation factor IF-3, found in Deinococcus radiodurans (strain ATCC 13939 / DSM 20539 / JCM 16871 / CCUG 27074 / LMG 4051 / NBRC 15346 / NCIMB 9279 / VKM B-1422 / R1).